Consider the following 450-residue polypeptide: Probable ECA polymerase (450 aa).

11 helical membrane passes run 6 to 26 (FSGL…LTWF), 37 to 57 (VFFS…TSVL), 63 to 83 (VGVA…CFYA), 118 to 138 (VILM…NGFL), 155 to 175 (GVAL…VYFL), 181 to 201 (AWLF…MIVG), 207 to 227 (IIIA…ISLW), 228 to 248 (MLAA…LKRY), 341 to 361 (LVVM…GLII), 378 to 398 (YKAA…IVLA), and 410 to 430 (VFFI…YWLF).

This sequence belongs to the WzyE family. As to quaternary structure, probably part of a complex composed of WzxE, WzyE and WzzE.

The protein resides in the cell inner membrane. It participates in bacterial outer membrane biogenesis; enterobacterial common antigen biosynthesis. Its function is as follows. Probably involved in the polymerization of enterobacterial common antigen (ECA) trisaccharide repeat units. This Escherichia coli O17:K52:H18 (strain UMN026 / ExPEC) protein is Probable ECA polymerase.